Here is a 95-residue protein sequence, read N- to C-terminus: Cobalt transport protein CbiN (95 aa).

Helical transmembrane passes span 7 to 27 (IMLI…SGLG) and 67 to 87 (LLFA…FGYY).

This sequence belongs to the CbiN family. As to quaternary structure, forms an energy-coupling factor (ECF) transporter complex composed of an ATP-binding protein (A component, CbiO), a transmembrane protein (T component, CbiQ) and 2 possible substrate-capture proteins (S components, CbiM and CbiN) of unknown stoichimetry.

It localises to the cell membrane. It participates in cofactor biosynthesis; adenosylcobalamin biosynthesis. Functionally, part of the energy-coupling factor (ECF) transporter complex CbiMNOQ involved in cobalt import. This chain is Cobalt transport protein CbiN, found in Methanothermobacter marburgensis (strain ATCC BAA-927 / DSM 2133 / JCM 14651 / NBRC 100331 / OCM 82 / Marburg) (Methanobacterium thermoautotrophicum).